We begin with the raw amino-acid sequence, 837 residues long: Striatin-interacting protein 1 (837 aa).

Met1 is modified (N-acetylmethionine). 2 disordered regions span residues 1–67 (MEPA…ESPD) and 333–423 (AASP…KGLP). Positions 18–35 (PQPPPPPPPAAAQPPPGA) are enriched in pro residues. Residues 36-46 (PRAAAGLLPGG) show a composition bias toward low complexity. Residues 47–60 (KAREFNRNQRKDSE) show a composition bias toward basic and acidic residues. 3 positions are modified to phosphoserine: Ser59, Ser335, and Ser339. The span at 356–377 (KALIKQDNLDAFNERDPYKADD) shows a compositional bias: basic and acidic residues. The segment covering 378 to 391 (SREEEEENDDDNSL) has biased composition (acidic residues). The residue at position 788 (Ser788) is a Phosphoserine. Residues 796 to 837 (DNCLQSVLGQRVDLPEDFQMNYDLWLEREVFSKPISWEELLQ) form a required for STRIPAK core complex formation region.

It belongs to the STRIP family. As to quaternary structure, part of the core of STRIPAK complexes composed of PP2A catalytic and scaffolding subunits, the striatins (PP2A regulatory subunits), the striatin-associated proteins MOB4, STRIP1 and STRIP2, PDCD10 and members of the STE20 kinases, such as STK24 and STK26. The STRIPAK complex can be extended by adapter proteins such as SLMAP:SIKE1, CTTNBP2 or CTTNBP2NL. Interacts with CDC42BPB. Interacts with CTTNBP2NL.

The protein resides in the cytoplasm. Its function is as follows. Plays a role in the regulation of cell morphology and cytoskeletal organization. Required in the cortical actin filament dynamics and cell shape. Part of the striatin-interacting phosphatase and kinase (STRIPAK) complexes. STRIPAK complexes have critical roles in protein (de)phosphorylation and are regulators of multiple signaling pathways including Hippo, MAPK, nuclear receptor and cytoskeleton remodeling. Different types of STRIPAK complexes are involved in a variety of biological processes such as cell growth, differentiation, apoptosis, metabolism and immune regulation. This is Striatin-interacting protein 1 from Homo sapiens (Human).